A 1697-amino-acid chain; its full sequence is SAC3 family protein B (1697 aa).

4 disordered regions span residues 54 to 134 (PPAS…QPGG), 167 to 280 (QRPN…SRSN), 306 to 413 (EATR…EQAR), and 491 to 512 (ESERGERERKGDLDHYERVDGD). Residues 120 to 134 (QNPSPSSGQPYQPGG) show a composition bias toward low complexity. Positions 178 to 192 (DGSRNFLKDHGEHSR) are enriched in basic and acidic residues. A compositionally biased stretch (polar residues) spans 193–202 (ATSPPATSHI). Residues 215–227 (RSQDSKRKSRSDI) show a composition bias toward basic and acidic residues. 3 stretches are compositionally biased toward polar residues: residues 233–243 (MGFSRRNQSPV), 257–280 (PLSSRTWMRSPSSAENNPVRSRSN), and 335–380 (RFST…SPAT). Positions 625–813 (NIEQMNKTSV…KCSKLVHMKK (189 aa)) constitute a PCI domain.

It belongs to the SAC3 family. Interacts with SAC3A, EER5 and CML19. Interacts with UCH1 and UCH2.

It localises to the nucleus. Its function is as follows. Component of the TREX-2 complex (transcription and export complex 2), a muliprotein complex that functions in docking export-competent ribonucleoprotein particles (mRNPs) to the nuclear entrance of the nuclear pore complex (nuclear basket). TREX-2 participates in mRNA export and accurate chromatin positioning in the nucleus by tethering genes to the nuclear periphery. This Arabidopsis thaliana (Mouse-ear cress) protein is SAC3 family protein B.